The primary structure comprises 190 residues: Recombination protein RecR (190 aa).

The C4-type zinc finger occupies 58–73 (CGQCGALSENELCEIC). The region spanning 81–167 (NILCIVESPK…TFSKIAQGIP (87 aa)) is the Toprim domain.

This sequence belongs to the RecR family.

In terms of biological role, may play a role in DNA repair. It seems to be involved in an RecBC-independent recombinational process of DNA repair. It may act with RecF and RecO. This Campylobacter jejuni subsp. jejuni serotype O:6 (strain 81116 / NCTC 11828) protein is Recombination protein RecR.